The chain runs to 44 residues: Large ribosomal subunit protein bL34 (44 aa).

The protein belongs to the bacterial ribosomal protein bL34 family.

In Buchnera aphidicola subsp. Cinara cedri (strain Cc), this protein is Large ribosomal subunit protein bL34.